The following is a 612-amino-acid chain: MEDLDTKIKTLKNMGVSESDAKDSLERCGYDVESAAEFIFSGQLEKSRLVPIMSSTSIASSLPSYQDTFFLPSPRKRRRLPGRIGTVLKPSALFPAIAPFLFVVFEIPVALNTFVHATCKGLLFAEDNASFHRPFTDVSAHLSSSSLSKYNHHSNHRLASPGWWYGEDSCISQSLDPRSVMQVQTIRAFEFLFSSHRLYLDTVHITAALSQVLAGLGNTNTSMSDGDCIAAFLSSYFSPPNAEFDSTFCSTLSSLTNSEKPTYIFNFKPNSTPDLRLSIESCLDLLLHPPSSAQKNWSWIKHVGKVFCCSLPGNNASGTPRFLLTPKIDLSKCIIENRDEMLRRYQLETVYRKTLLEWEDLYKRLTGVTLTDKDIGELLTDGQQFLEKRNPALSSHLQLLKETLQTKISTLISNTNATQHKLSTLYRGMQNKCTRRLLAVIIEPSIIYICLKNSAVQSNRNVSPSANHNEQWYLVRFTTSATISQDSPPCIVEPVTFEEVDLEFEKHISYHNRLLIYVDDDCEASTRTVIPTSVKNFIAEDNEYFDDELAGIIHSPTVSTRSSRSSDVSEYDLEDQGGLQLTVPHINTDVQCHRSRNSACEFPESMHVEHSG.

The UBA domain occupies 3-42; the sequence is DLDTKIKTLKNMGVSESDAKDSLERCGYDVESAAEFIFSG. Ser-595 is subject to Phosphoserine.

The protein resides in the cytoplasm. Its subcellular location is the nucleus. This is UBA domain-containing protein 6 (ucp6) from Schizosaccharomyces pombe (strain 972 / ATCC 24843) (Fission yeast).